A 471-amino-acid polypeptide reads, in one-letter code: Maintenance of mitochondrial morphology protein 1 (471 aa).

At 1–21 the chain is on the lumenal side; the sequence is MSSPQNTSCPPSQHSLSFTQG. Residues 22-42 form a helical membrane-spanning segment; sequence LLLGQLSVVLLIGAFIKFFIF. The Cytoplasmic portion of the chain corresponds to 43–471; that stretch reads GESPSSSSRG…GSLPGAPAVA (429 aa). The SMP-LTD domain maps to 128 to 370; sequence QPESLDWFNV…EPRVQLVALP (243 aa). Disordered stretches follow at residues 271–306, 395–415, and 448–471; these read GTTESSPHLPHPENQNESKPSRQDPEIPTNKDGVRS, EDPATKATHSGFTPVNANRDG, and RGDTQSVGEQLRIPGSLPGAPAVA. Over residues 280–295 the composition is skewed to basic and acidic residues; it reads PHPENQNESKPSRQDP. A compositionally biased stretch (polar residues) spans 401–410; the sequence is ATHSGFTPVN.

This sequence belongs to the MMM1 family. As to quaternary structure, homodimer. Component of the ER-mitochondria encounter structure (ERMES) or MDM complex, composed of MMM1, MDM10, MDM12 and MDM34. An MMM1 homodimer associates with one molecule of MDM12 on each side in a pairwise head-to-tail manner, and the SMP-LTD domains of MMM1 and MDM12 generate a continuous hydrophobic tunnel for phospholipid trafficking.

It is found in the endoplasmic reticulum membrane. Functionally, component of the ERMES/MDM complex, which serves as a molecular tether to connect the endoplasmic reticulum (ER) and mitochondria. Components of this complex are involved in the control of mitochondrial shape and protein biogenesis, and function in nonvesicular lipid trafficking between the ER and mitochondria. The MDM12-MMM1 subcomplex functions in the major beta-barrel assembly pathway that is responsible for biogenesis of all outer membrane beta-barrel proteins, and acts in a late step after the SAM complex. The MDM10-MDM12-MMM1 subcomplex further acts in the TOM40-specific pathway after the action of the MDM12-MMM1 complex. Essential for establishing and maintaining the structure of mitochondria and maintenance of mtDNA nucleoids. This is Maintenance of mitochondrial morphology protein 1 from Arthroderma otae (strain ATCC MYA-4605 / CBS 113480) (Microsporum canis).